A 532-amino-acid chain; its full sequence is Intercellular adhesion molecule 1 (532 aa).

The first 27 residues, 1-27 (MAPSSPRPALPALLVLLGALFPGPGNA), serve as a signal peptide directing secretion. Topologically, residues 28–480 (QTSVSPPKVI…TVNVLSPRYE (453 aa)) are extracellular. Ig-like C2-type domains lie at 41-103 (GGSV…QSTA) and 128-193 (GKDL…LDLR). Intrachain disulfides connect cysteine 48–cysteine 92, cysteine 52–cysteine 96, and cysteine 135–cysteine 186. An N-linked (GlcNAc...) asparagine glycan is attached at asparagine 145. The Cell attachment site; atypical motif lies at 152 to 154 (RGE). Residues asparagine 183, asparagine 202, asparagine 267, and asparagine 296 are each glycosylated (N-linked (GlcNAc...) asparagine). 2 Ig-like C2-type domains span residues 230 to 297 (DTQG…LGNQ) and 325 to 378 (GTEV…LEVA). Cysteine 237 and cysteine 290 are oxidised to a cystine. An intrachain disulfide couples cysteine 332 to cysteine 371. N-linked (GlcNAc...) asparagine glycans are attached at residues asparagine 385 and asparagine 406. 3 disulfide bridges follow: cysteine 403–cysteine 419, cysteine 419–cysteine 457, and cysteine 431–cysteine 457. Residues 412–464 (NSQQTPMCQASGNPLPELKCLKDGTFPLPVGESVTVTRDLEGTYLCRARSTQG) form the Ig-like C2-type 5 domain. The helical transmembrane segment at 481–503 (IVIITVVAAAVIMGTAGLSTYLY) threads the bilayer. Topologically, residues 504 to 532 (NRQRKIRKYRLQQAQKGTPMKPNTQATPP) are cytoplasmic. Residues threonine 521 and threonine 530 each carry the phosphothreonine modification.

This sequence belongs to the immunoglobulin superfamily. ICAM family. As to quaternary structure, homodimer. Interacts with MUC1 and promotes cell aggregation in epithelial cells. Interacts with ARHGEF26/SGEF. Interacts (on T cell side) with CD81, CD247 and CD9 at immunological synapses between antigen-presenting cells and T cells. Post-translationally, monoubiquitinated, which is promoted by MARCH9 and leads to endocytosis.

The protein localises to the membrane. Functionally, ICAM proteins are ligands for the leukocyte adhesion protein LFA-1 (integrin alpha-L/beta-2). During leukocyte trans-endothelial migration, ICAM1 engagement promotes the assembly of endothelial apical cups through ARHGEF26/SGEF and RHOG activation. This chain is Intercellular adhesion molecule 1 (ICAM1), found in Pan troglodytes (Chimpanzee).